The chain runs to 263 residues: Small ribosomal subunit protein bS1c (263 aa).

S1 motif domains follow at residues 27 to 96 (GDIV…LSIR), 114 to 178 (DSLL…LSHR), and 192 to 260 (GNII…LSMK).

This sequence belongs to the bacterial ribosomal protein bS1 family.

Its subcellular location is the plastid. It is found in the chloroplast. The sequence is that of Small ribosomal subunit protein bS1c (rps1) from Pyropia yezoensis (Susabi-nori).